We begin with the raw amino-acid sequence, 184 residues long: Ribosome-recycling factor (184 aa).

Belongs to the RRF family.

It is found in the cytoplasm. Responsible for the release of ribosomes from messenger RNA at the termination of protein biosynthesis. May increase the efficiency of translation by recycling ribosomes from one round of translation to another. The sequence is that of Ribosome-recycling factor from Cutibacterium acnes (strain DSM 16379 / KPA171202) (Propionibacterium acnes).